Here is a 363-residue protein sequence, read N- to C-terminus: Carbamoyl phosphate synthase small chain (363 aa).

Positions 1–172 are CPSase; the sequence is MKAFLVLDNG…TKYIFGTHTG (172 aa). L-glutamine contacts are provided by S45, G224, and G226. The 187-residue stretch at 176-362 folds into the Glutamine amidotransferase type-1 domain; sequence KLAVYDYGVK…YDLVETTKRG (187 aa). C252 (nucleophile) is an active-site residue. L-glutamine is bound by residues L253, Q256, N294, G296, and F297. Catalysis depends on residues H335 and E337.

It belongs to the CarA family. Composed of two chains; the small (or glutamine) chain promotes the hydrolysis of glutamine to ammonia, which is used by the large (or ammonia) chain to synthesize carbamoyl phosphate. Tetramer of heterodimers (alpha,beta)4.

The catalysed reaction is hydrogencarbonate + L-glutamine + 2 ATP + H2O = carbamoyl phosphate + L-glutamate + 2 ADP + phosphate + 2 H(+). It catalyses the reaction L-glutamine + H2O = L-glutamate + NH4(+). The protein operates within amino-acid biosynthesis; L-arginine biosynthesis; carbamoyl phosphate from bicarbonate: step 1/1. Its pathway is pyrimidine metabolism; UMP biosynthesis via de novo pathway; (S)-dihydroorotate from bicarbonate: step 1/3. Functionally, small subunit of the glutamine-dependent carbamoyl phosphate synthetase (CPSase). CPSase catalyzes the formation of carbamoyl phosphate from the ammonia moiety of glutamine, carbonate, and phosphate donated by ATP, constituting the first step of 2 biosynthetic pathways, one leading to arginine and/or urea and the other to pyrimidine nucleotides. The small subunit (glutamine amidotransferase) binds and cleaves glutamine to supply the large subunit with the substrate ammonia. The protein is Carbamoyl phosphate synthase small chain of Leptospira borgpetersenii serovar Hardjo-bovis (strain L550).